We begin with the raw amino-acid sequence, 275 residues long: 3-deoxy-manno-octulosonate cytidylyltransferase (275 aa).

It belongs to the KdsB family.

The protein resides in the cytoplasm. The catalysed reaction is 3-deoxy-alpha-D-manno-oct-2-ulosonate + CTP = CMP-3-deoxy-beta-D-manno-octulosonate + diphosphate. It participates in nucleotide-sugar biosynthesis; CMP-3-deoxy-D-manno-octulosonate biosynthesis; CMP-3-deoxy-D-manno-octulosonate from 3-deoxy-D-manno-octulosonate and CTP: step 1/1. It functions in the pathway bacterial outer membrane biogenesis; lipopolysaccharide biosynthesis. Its function is as follows. Activates KDO (a required 8-carbon sugar) for incorporation into bacterial lipopolysaccharide in Gram-negative bacteria. This is 3-deoxy-manno-octulosonate cytidylyltransferase from Psychrobacter sp. (strain PRwf-1).